Reading from the N-terminus, the 439-residue chain is Glycosyl hydrolase DigH (439 aa).

The first 27 residues, 1 to 27 (MDICSRNEKLAIRRPAILVALALLLCS), serve as a signal peptide directing secretion. Residue cysteine 28 is the site of N-palmitoyl cysteine attachment. Cysteine 28 is lipidated: S-diacylglycerol cysteine. The tract at residues 34–54 (ESMVTPPAGSKPPATTQQSSQ) is disordered.

It belongs to the glycosyl hydrolase-like 10 (GHL10) family.

It is found in the cell outer membrane. Divisome-localized glycosyl hydrolase that cleaves peptide-free (denuded) peptidoglycans. The sequence is that of Glycosyl hydrolase DigH from Escherichia coli O6:H1 (strain CFT073 / ATCC 700928 / UPEC).